A 264-amino-acid polypeptide reads, in one-letter code: uncharacterized protein (264 aa).

The N-terminal stretch at 1-21 (MMWNYFVTCIVLYANIISIHT) is a signal peptide. Residues 182–247 (QQPNAAQVPT…AANNGLDLTS (66 aa)) are disordered. The span at 190-213 (PTTSQQQPTSNTGGQQPPTNASNP) shows a compositional bias: low complexity. N-linked (GlcNAc...) asparagine glycosylation is present at Asn209. Over residues 214–226 (PTNPQPTPTPAQP) the composition is skewed to pro residues. The segment covering 230 to 247 (GTQVQQTPAANNGLDLTS) has biased composition (polar residues).

In terms of tissue distribution, component of the acid-insoluble and acid-soluble organic matrix of calcified layers of the shell (at protein level).

The protein resides in the secreted. This is an uncharacterized protein from Lottia gigantea (Giant owl limpet).